Reading from the N-terminus, the 368-residue chain is Aminomethyltransferase (368 aa).

Belongs to the GcvT family. In terms of assembly, the glycine cleavage system is composed of four proteins: P, T, L and H.

It carries out the reaction N(6)-[(R)-S(8)-aminomethyldihydrolipoyl]-L-lysyl-[protein] + (6S)-5,6,7,8-tetrahydrofolate = N(6)-[(R)-dihydrolipoyl]-L-lysyl-[protein] + (6R)-5,10-methylene-5,6,7,8-tetrahydrofolate + NH4(+). The glycine cleavage system catalyzes the degradation of glycine. The chain is Aminomethyltransferase from Xylella fastidiosa (strain M12).